The chain runs to 269 residues: uncharacterized protein (269 aa).

Residue 15-41 (QKSVLITGCSSGIGLESALELKRQGFH) participates in NADP(+) binding. Ser-146 provides a ligand contact to substrate. Residue Tyr-159 is the Proton acceptor of the active site.

The protein belongs to the short-chain dehydrogenases/reductases (SDR) family.

This is an uncharacterized protein from Escherichia coli O6:H1 (strain CFT073 / ATCC 700928 / UPEC).